Reading from the N-terminus, the 369-residue chain is MQPQDPHEHLKDLDTRLAGIEQVLDLPAMRREAADLERQAADPGLWNDPENAQRVTSRLSFLQAEIRRVEGLRKRLDDVMVLFELAEAENDEPTRTEALAEMAALQKAIDDLEVRTLLSGEYDAREALVTINSQAGGVDAADWAQMLLRMYLRWAERHGYPTEILDTSYAEEAGIKSATFIVHAPFTYGLLAAEHGTHRLVRISPFDNQARRQTSFAGVDVVPVVEKTDHIDIPEDEIRVDVFRSSGPGGQGVNTTDSAVRITHLPTGIVVTCQNERSQLQNRATAMMVLQARLLERRRQEEAAKLAALRGETTTSWGTQIRNYVLHPYQLVKDLRTEVETSNTAGVLDGEIDEFIDAGVRWRRQRERR.

At glutamine 251 the chain carries N5-methylglutamine.

This sequence belongs to the prokaryotic/mitochondrial release factor family. Methylated by PrmC. Methylation increases the termination efficiency of RF2.

The protein localises to the cytoplasm. Functionally, peptide chain release factor 2 directs the termination of translation in response to the peptide chain termination codons UGA and UAA. The polypeptide is Peptide chain release factor 2 (Acidothermus cellulolyticus (strain ATCC 43068 / DSM 8971 / 11B)).